The following is a 157-amino-acid chain: Small ribosomal subunit protein uS13 (157 aa).

The protein belongs to the universal ribosomal protein uS13 family. In terms of assembly, part of the 30S ribosomal subunit. Forms a loose heterodimer with protein S19. Forms two bridges to the 50S subunit in the 70S ribosome.

In terms of biological role, located at the top of the head of the 30S subunit, it contacts several helices of the 16S rRNA. In the 70S ribosome it contacts the 23S rRNA (bridge B1a) and protein L5 of the 50S subunit (bridge B1b), connecting the 2 subunits; these bridges are implicated in subunit movement. The sequence is that of Small ribosomal subunit protein uS13 from Thermofilum pendens (strain DSM 2475 / Hrk 5).